Reading from the N-terminus, the 152-residue chain is D-aminoacyl-tRNA deacylase (152 aa).

Residues 142 to 143 carry the Gly-cisPro motif, important for rejection of L-amino acids motif; that stretch reads GP.

Belongs to the DTD family. In terms of assembly, homodimer.

The protein localises to the cytoplasm. It catalyses the reaction glycyl-tRNA(Ala) + H2O = tRNA(Ala) + glycine + H(+). The catalysed reaction is a D-aminoacyl-tRNA + H2O = a tRNA + a D-alpha-amino acid + H(+). An aminoacyl-tRNA editing enzyme that deacylates mischarged D-aminoacyl-tRNAs. Also deacylates mischarged glycyl-tRNA(Ala), protecting cells against glycine mischarging by AlaRS. Acts via tRNA-based rather than protein-based catalysis; rejects L-amino acids rather than detecting D-amino acids in the active site. By recycling D-aminoacyl-tRNA to D-amino acids and free tRNA molecules, this enzyme counteracts the toxicity associated with the formation of D-aminoacyl-tRNA entities in vivo and helps enforce protein L-homochirality. This Burkholderia mallei (strain NCTC 10247) protein is D-aminoacyl-tRNA deacylase.